The following is a 323-amino-acid chain: Homoserine kinase (323 aa).

This sequence belongs to the pseudomonas-type ThrB family.

The enzyme catalyses L-homoserine + ATP = O-phospho-L-homoserine + ADP + H(+). It functions in the pathway amino-acid biosynthesis; L-threonine biosynthesis; L-threonine from L-aspartate: step 4/5. In Phenylobacterium zucineum (strain HLK1), this protein is Homoserine kinase.